Here is a 271-residue protein sequence, read N- to C-terminus: Thiazole synthase (271 aa).

Catalysis depends on lysine 95, which acts as the Schiff-base intermediate with DXP. 1-deoxy-D-xylulose 5-phosphate-binding positions include glycine 156, 182-183 (AG), and 204-205 (NT).

The protein belongs to the ThiG family. As to quaternary structure, homotetramer. Forms heterodimers with either ThiH or ThiS.

It localises to the cytoplasm. The enzyme catalyses [ThiS sulfur-carrier protein]-C-terminal-Gly-aminoethanethioate + 2-iminoacetate + 1-deoxy-D-xylulose 5-phosphate = [ThiS sulfur-carrier protein]-C-terminal Gly-Gly + 2-[(2R,5Z)-2-carboxy-4-methylthiazol-5(2H)-ylidene]ethyl phosphate + 2 H2O + H(+). It participates in cofactor biosynthesis; thiamine diphosphate biosynthesis. Functionally, catalyzes the rearrangement of 1-deoxy-D-xylulose 5-phosphate (DXP) to produce the thiazole phosphate moiety of thiamine. Sulfur is provided by the thiocarboxylate moiety of the carrier protein ThiS. In vitro, sulfur can be provided by H(2)S. In Yersinia pestis, this protein is Thiazole synthase.